The sequence spans 319 residues: Taste receptor type 2 member 14 (319 aa).

Residues 1–7 (MDGVIKS) lie on the Extracellular side of the membrane. The chain crosses the membrane as a helical span at residues 8-28 (IFTFILIVEFIIGNLGNSFIV). Topologically, residues 29–55 (LVNCIDWVKRRKISLVDQILIALAISR) are cytoplasmic. Residues 56–76 (ISLVWSIFGSWCVSVFFPALF) form a helical membrane-spanning segment. Topologically, residues 77–87 (ATEKLLRMLTN) are extracellular. Cholesterol is bound by residues Thr86 and Trp89. A helical membrane pass occupies residues 88–108 (IWTVTNHFSVWLATILGTFYF). The Cytoplasmic segment spans residues 109–129 (LKIANFSNSIFLYLKWRVKKV). The helical transmembrane segment at 130–150 (VLVLLLVTLGLLFLNILLINI) threads the bilayer. Residues 151–184 (HINASINGYRGNMTCSSASCNFIRFSRAIALTST) lie on the Extracellular side of the membrane. N-linked (GlcNAc...) asparagine glycans are attached at residues Asn153 and Asn162. A cholesterol-binding site is contributed by Ala180. Residues 185-205 (VFVLIPFTLSLATSLLLSFSL) traverse the membrane as a helical segment. The Cytoplasmic segment spans residues 206-233 (WKHHKKMQHTVKGYRDVSTKAHRGVMQT). Residues 234-254 (VITFLLLYAVFLLTFFISIWA) traverse the membrane as a helical segment. The Extracellular segment spans residues 255–263 (SVRLKENQI). Residues 264–284 (IILSEMMGLAYPSGHSCVLIL) form a helical membrane-spanning segment. The cholesterol site is built by Ser267 and Met270. The Cytoplasmic portion of the chain corresponds to 285 to 319 (GNKKLRQASLSVLWWLRYRFKHGEPSGHKEFRESS).

The protein belongs to the G-protein coupled receptor T2R family. Core component of the TAS2R14-GNAI1 complex, consisting of TAS2R14, GNAI1, GNB1 and GNG2; within the complex interacts with GNAI1. Core component of the TAS2R14-GNAT3 complex, consisting of TAS2R14, GNAT3, GNB1 and GNG2; within the complex interacts with GNAT3. Core component of the TAS2R14-GNAS2 complex, consisting of TAS2R14, GNAS2, GNB1 and GNG2; within the complex interacts with GNAS2.

The protein resides in the membrane. It carries out the reaction Ca(2+)(in) = Ca(2+)(out). It catalyses the reaction 3',5'-cyclic AMP(in) = 3',5'-cyclic AMP(out). With respect to regulation, basal activity is enhanced by binding to bitter tastants, such as flufenamic acid and aristolochic acid. Regulated by cholesterol in a concentration-dependent manner. Functionally, gustducin-linked G-protein coupled receptor that plays a role in the perception of bitterness. The activity of this receptor stimulates GNAT3, activating the gustducin G-protein pathway. Likely plays a role in sensing the chemical composition of the gastrointestinal content and other extra-oral tissues via the inhibitory G-protein pathways. This Macaca mulatta (Rhesus macaque) protein is Taste receptor type 2 member 14 (TAS2R14).